The sequence spans 214 residues: Ras-related protein RABA2b (214 aa).

Position 19 to 26 (19 to 26) interacts with GTP; that stretch reads GDSGVGKS. The short motif at 41 to 49 is the Effector region element; the sequence is SKSTIGVEF. GTP contacts are provided by residues 67–71, 125–128, and 155–156; these read DTAGQ, NKSD, and SA. S-geranylgeranyl cysteine attachment occurs at residues C211 and C212.

Belongs to the small GTPase superfamily. Rab family. As to expression, expressed in root tips.

Its subcellular location is the endosome membrane. It localises to the golgi apparatus. The protein resides in the trans-Golgi network membrane. In terms of biological role, intracellular vesicle trafficking and protein transport. This is Ras-related protein RABA2b (RABA2B) from Arabidopsis thaliana (Mouse-ear cress).